The primary structure comprises 80 residues: uncharacterized protein (80 aa).

This is an uncharacterized protein from Bacillus subtilis (strain 168).